Here is a 298-residue protein sequence, read N- to C-terminus: Acetylglutamate kinase (298 aa).

Substrate contacts are provided by residues 69 to 70 (GG), R91, and N196.

Belongs to the acetylglutamate kinase family. ArgB subfamily.

It localises to the cytoplasm. It carries out the reaction N-acetyl-L-glutamate + ATP = N-acetyl-L-glutamyl 5-phosphate + ADP. It functions in the pathway amino-acid biosynthesis; L-arginine biosynthesis; N(2)-acetyl-L-ornithine from L-glutamate: step 2/4. Catalyzes the ATP-dependent phosphorylation of N-acetyl-L-glutamate. The chain is Acetylglutamate kinase from Rhodopseudomonas palustris (strain ATCC BAA-98 / CGA009).